Here is a 432-residue protein sequence, read N- to C-terminus: Pachytene checkpoint protein 2 homolog (432 aa).

An ATP-binding site is contributed by 179–186 (GPPGTGKT).

Belongs to the AAA ATPase family. PCH2 subfamily.

In terms of biological role, plays a key role in chromosome recombination and chromosome structure development during meiosis. Required at early steps in meiotic recombination that leads to non-crossovers pathways. Also needed for efficient completion of homologous synapsis by influencing crossover distribution along the chromosomes affecting both crossovers and non-crossovers pathways. The chain is Pachytene checkpoint protein 2 homolog (trip13) from Xenopus tropicalis (Western clawed frog).